An 836-amino-acid chain; its full sequence is Granulocyte colony-stimulating factor receptor (836 aa).

The first 24 residues, 1-24, serve as a signal peptide directing secretion; that stretch reads MARLGNCSLTWAALIILLLPGSLE. Positions 25–117 constitute an Ig-like C2-type domain; it reads ECGHISVSAP…SLQILDQVEL (93 aa). The Extracellular segment spans residues 25–627; that stretch reads ECGHISVSAP…TLTPEGSELH (603 aa). 2 cysteine pairs are disulfide-bonded: Cys26–Cys52 and Cys46–Cys101. N-linked (GlcNAc...) asparagine glycans are attached at residues Asn51, Asn93, Asn128, and Asn134. 5 consecutive Fibronectin type-III domains span residues 125–230, 233–332, 334–430, 431–528, and 530–623; these read IPHN…LEPP, RTMD…TTER, PTVR…SRGP, ALTR…MAPS, and APEL…TPEG. Cystine bridges form between Cys131–Cys142, Cys167–Cys218, Cys177–Cys186, Cys248–Cys295, and Cys266–Cys309. Residues 318–322 carry the WSXWS motif motif; that stretch reads WSDWS. 4 N-linked (GlcNAc...) asparagine glycosylation sites follow: Asn389, Asn474, Asn579, and Asn610. A helical transmembrane segment spans residues 628-650; sequence IILGLFGLLLLLTCLCGTAWLCC. The Cytoplasmic portion of the chain corresponds to 651–836; the sequence is SPNRKNPLWP…VHGMEALGSF (186 aa). The Box 1 motif motif lies at 658 to 666; it reads LWPSVPDPA.

It belongs to the type I cytokine receptor family. Type 2 subfamily. Homodimer. The dimeric receptor binds two CSF3 molecules. Interacts with CEACAM1; down-regulates the CSF3R-STAT3 pathway through recruitment of PTPN6 that dephosphorylates CSF3R. N-glycosylated. In terms of tissue distribution, one or several isoforms have been found in myelogenous leukemia cell line KG-1, leukemia U-937 cell line, in bone marrow cells, placenta, and peripheral blood granulocytes. Isoform GCSFR-2 is found only in leukemia U-937 cells. Isoform GCSFR-3 is highly expressed in placenta.

It is found in the secreted. It localises to the cell membrane. Functionally, receptor for granulocyte colony-stimulating factor (CSF3), essential for granulocytic maturation. Plays a crucial role in the proliferation, differentiation and survival of cells along the neutrophilic lineage. In addition it may function in some adhesion or recognition events at the cell surface. The polypeptide is Granulocyte colony-stimulating factor receptor (CSF3R) (Homo sapiens (Human)).